Here is a 507-residue protein sequence, read N- to C-terminus: Histidine ammonia-lyase (507 aa).

The 5-imidazolinone (Ala-Gly) cross-link spans 145–147 (ASG). 2,3-didehydroalanine (Ser) is present on Ser-146.

The protein belongs to the PAL/histidase family. Post-translationally, contains an active site 4-methylidene-imidazol-5-one (MIO), which is formed autocatalytically by cyclization and dehydration of residues Ala-Ser-Gly.

The protein resides in the cytoplasm. It carries out the reaction L-histidine = trans-urocanate + NH4(+). Its pathway is amino-acid degradation; L-histidine degradation into L-glutamate; N-formimidoyl-L-glutamate from L-histidine: step 1/3. In Treponema denticola (strain ATCC 35405 / DSM 14222 / CIP 103919 / JCM 8153 / KCTC 15104), this protein is Histidine ammonia-lyase.